Here is a 316-residue protein sequence, read N- to C-terminus: Secondary metabolism regulator laeA (316 aa).

It belongs to the methyltransferase superfamily. LaeA methyltransferase family. In terms of assembly, component of the heterotrimeric velvet complex composed of laeA, veA and velB; VeA acting as a bridging protein between laeA and velB.

The protein resides in the nucleus. It catalyses the reaction L-methionyl-[protein] + S-adenosyl-L-methionine = S-methyl-L-methionyl-[protein] + S-adenosyl-L-homocysteine. Its function is as follows. Methyltransferase that performs automethylation. No other methyl-accepting substrate has been identified yet. Component of the velvet transcription factor complex that acts as a global regulator for secondary metabolite gene expression. Controls the biosynthetic gene cluster for beauvericin, a depsipeptide mycotoxin that functions as a virulence determinant. The velvet complex also regulates chromatin structure and transcription of siderophore biosynthetic genes and is required for infection of tomato plants. The velvet complex also governs expression of nitrate metabolism genes. The polypeptide is Secondary metabolism regulator laeA (Fusarium oxysporum f. sp. lycopersici (strain 4287 / CBS 123668 / FGSC 9935 / NRRL 34936) (Fusarium vascular wilt of tomato)).